The primary structure comprises 411 residues: Protein Brevis radix-like 2 (411 aa).

Disordered stretches follow at residues 10–31 (KDGG…KSLT) and 103–149 (AAPS…DDDE). Residues 20–31 (ATATPNSGKSLT) are compositionally biased toward polar residues. Acidic residues predominate over residues 136–149 (GEEDYDDDDDDDDE). The 57-residue stretch at 161–217 (REWTAQVEPGVQITFVSIPGGAGNDLKRIRFSREMFNKWEAQRWWGENYDRVVELYN) folds into the BRX 1 domain. Disordered stretches follow at residues 245 to 294 (SRVG…VAAA) and 324 to 346 (AGPA…ASVS). Positions 276-294 (SRTASSKAQLSSSSSVAAA) are enriched in low complexity. The region spanning 356–411 (TEWVEQDEPGVSITIREFGDGTRELRRVRFSRERFGEERAKVWWEQNRDRIHAQYL) is the BRX 2 domain.

It belongs to the BRX family.

Its subcellular location is the nucleus. In Oryza sativa subsp. japonica (Rice), this protein is Protein Brevis radix-like 2 (BRXL2).